A 145-amino-acid polypeptide reads, in one-letter code: UPF0179 protein TV1250 (145 aa).

The protein belongs to the UPF0179 family.

The chain is UPF0179 protein TV1250 from Thermoplasma volcanium (strain ATCC 51530 / DSM 4299 / JCM 9571 / NBRC 15438 / GSS1).